The chain runs to 768 residues: Translation factor GUF1 homolog, mitochondrial (768 aa).

Residues 1–29 (MRLWNRFSRLGNLLCACAACGCSFTPWRC) constitute a mitochondrion transit peptide. A tr-type G domain is found at 110 to 293 (SNIRNVAVVA…AIIERVPSPS (184 aa)). Residues 119 to 126 (AHVDHGKT), 184 to 188 (DTPGH), and 238 to 241 (TKMD) contribute to the GTP site.

This sequence belongs to the TRAFAC class translation factor GTPase superfamily. Classic translation factor GTPase family. LepA subfamily.

The protein resides in the mitochondrion inner membrane. The enzyme catalyses GTP + H2O = GDP + phosphate + H(+). Its function is as follows. Promotes mitochondrial protein synthesis. May act as a fidelity factor of the translation reaction, by catalyzing a one-codon backward translocation of tRNAs on improperly translocated ribosomes. Binds to mitochondrial ribosomes in a GTP-dependent manner. This is Translation factor GUF1 homolog, mitochondrial from Trypanosoma brucei brucei (strain 927/4 GUTat10.1).